We begin with the raw amino-acid sequence, 154 residues long: Ecotin-like protein 2 (154 aa).

The protein belongs to the protease inhibitor I11 (ecotin) family.

The sequence is that of Ecotin-like protein 2 from Leishmania braziliensis.